Consider the following 136-residue polypeptide: Beta-hordothionin (136 aa).

The first 27 residues, 1-27, serve as a signal peptide directing secretion; that stretch reads MGSKGLKGVMVCLLILGLVLEHVQVEG. 4 cysteine pairs are disulfide-bonded: Cys30–Cys66, Cys31–Cys58, Cys39–Cys56, and Cys43–Cys52. Residues 73–136 constitute a propeptide, acidic domain; that stretch reads LALVSNSDEP…GDVGLTSLTA (64 aa).

The protein belongs to the plant thionin (TC 1.C.44) family. 4 C-C subfamily. In terms of assembly, homodimer.

The protein resides in the secreted. Functionally, thionins are small plant proteins which are toxic to animal cells. They seem to exert their toxic effect at the level of the cell membrane. Their precise function is not known. The protein is Beta-hordothionin (THI1.2) of Hordeum vulgare (Barley).